Reading from the N-terminus, the 456-residue chain is Flagellum-specific ATP synthase (456 aa).

Residue 182 to 189 coordinates ATP; that stretch reads AGSGVGKS.

Belongs to the ATPase alpha/beta chains family.

Its subcellular location is the cytoplasm. The enzyme catalyses ATP + H2O + 4 H(+)(in) = ADP + phosphate + 5 H(+)(out). Probable catalytic subunit of a protein translocase for flagellum-specific export, or a proton translocase involved in local circuits at the flagellum. May be involved in a specialized protein export pathway that proceeds without signal peptide cleavage. This Salmonella typhimurium (strain LT2 / SGSC1412 / ATCC 700720) protein is Flagellum-specific ATP synthase (fliI).